We begin with the raw amino-acid sequence, 253 residues long: tRNA (guanine-N(1)-)-methyltransferase (253 aa).

S-adenosyl-L-methionine-binding positions include G113 and 133 to 138; that span reads IGDYVL.

Belongs to the RNA methyltransferase TrmD family. Homodimer.

It localises to the cytoplasm. It carries out the reaction guanosine(37) in tRNA + S-adenosyl-L-methionine = N(1)-methylguanosine(37) in tRNA + S-adenosyl-L-homocysteine + H(+). Functionally, specifically methylates guanosine-37 in various tRNAs. This Chloroflexus aurantiacus (strain ATCC 29366 / DSM 635 / J-10-fl) protein is tRNA (guanine-N(1)-)-methyltransferase.